A 424-amino-acid chain; its full sequence is UPF0761 membrane protein Smlt0865 (424 aa).

The next 6 membrane-spanning stretches (helical) occupy residues 48–68 (VFAL…FPVF), 101–121 (SAGQ…LITL), 144–164 (FLVY…SLAV), 181–201 (WLAE…CITL), 216–236 (AVPG…GIGA), and 251–271 (VAFV…VLLG).

It belongs to the UPF0761 family.

Its subcellular location is the cell inner membrane. The chain is UPF0761 membrane protein Smlt0865 from Stenotrophomonas maltophilia (strain K279a).